Here is a 315-residue protein sequence, read N- to C-terminus: tRNA pseudouridine synthase B (315 aa).

Asp-47 acts as the Nucleophile in catalysis.

Belongs to the pseudouridine synthase TruB family. Type 1 subfamily.

The enzyme catalyses uridine(55) in tRNA = pseudouridine(55) in tRNA. Its function is as follows. Responsible for synthesis of pseudouridine from uracil-55 in the psi GC loop of transfer RNAs. The polypeptide is tRNA pseudouridine synthase B (Shewanella amazonensis (strain ATCC BAA-1098 / SB2B)).